The primary structure comprises 363 residues: Protein-glutamate methylesterase/protein-glutamine glutaminase of group 3 operon (363 aa).

The Response regulatory domain occupies 7–124; that stretch reads RVLIVDDSAS…RQALLECSTR (118 aa). Position 58 is a 4-aspartylphosphate (aspartate 58). A CheB-type methylesterase domain is found at 166–357; it reads PTTERIVCIG…REIMLWYQAG (192 aa). Residues serine 177, histidine 203, and aspartate 299 contribute to the active site.

The protein belongs to the CheB family. Phosphorylated by CheA. Phosphorylation of the N-terminal regulatory domain activates the methylesterase activity.

It is found in the cytoplasm. The catalysed reaction is [protein]-L-glutamate 5-O-methyl ester + H2O = L-glutamyl-[protein] + methanol + H(+). The enzyme catalyses L-glutaminyl-[protein] + H2O = L-glutamyl-[protein] + NH4(+). In terms of biological role, involved in chemotaxis. Part of a chemotaxis signal transduction system that modulates chemotaxis in response to various stimuli. Catalyzes the demethylation of specific methylglutamate residues introduced into the chemoreceptors (methyl-accepting chemotaxis proteins or MCP) by CheR. Also mediates the irreversible deamidation of specific glutamine residues to glutamic acid. The chain is Protein-glutamate methylesterase/protein-glutamine glutaminase of group 3 operon from Bradyrhizobium diazoefficiens (strain JCM 10833 / BCRC 13528 / IAM 13628 / NBRC 14792 / USDA 110).